The sequence spans 208 residues: dITP/XTP pyrophosphatase (208 aa).

15–20 (SHNAGK) contributes to the substrate binding site. 2 residues coordinate Mg(2+): Glu47 and Asp76. The active-site Proton acceptor is Asp76. Residues Ser77, 157–160 (HGYD), Lys180, and 185–186 (HR) contribute to the substrate site.

It belongs to the HAM1 NTPase family. Homodimer. Mg(2+) is required as a cofactor.

It catalyses the reaction XTP + H2O = XMP + diphosphate + H(+). The enzyme catalyses dITP + H2O = dIMP + diphosphate + H(+). It carries out the reaction ITP + H2O = IMP + diphosphate + H(+). Functionally, pyrophosphatase that catalyzes the hydrolysis of nucleoside triphosphates to their monophosphate derivatives, with a high preference for the non-canonical purine nucleotides XTP (xanthosine triphosphate), dITP (deoxyinosine triphosphate) and ITP. Seems to function as a house-cleaning enzyme that removes non-canonical purine nucleotides from the nucleotide pool, thus preventing their incorporation into DNA/RNA and avoiding chromosomal lesions. In Gluconobacter oxydans (strain 621H) (Gluconobacter suboxydans), this protein is dITP/XTP pyrophosphatase.